The primary structure comprises 174 residues: Adipose-secreted signaling protein (174 aa).

At A2 the chain carries N-acetylalanine. The residue at position 147 (T147) is a Phosphothreonine.

It belongs to the ADISSP family. In terms of tissue distribution, expression is adipose-specific and highly brown adipose tissue-enriched.

Its subcellular location is the secreted. Adipocyte-secreted protein (adipokine) that acts as a key regulator for white adipose tissue (WAT) thermogenesis and glucose homeostasis at least in part through activation of protein kinase A (PKA). The polypeptide is Adipose-secreted signaling protein (Mus musculus (Mouse)).